A 101-amino-acid chain; its full sequence is Phosphoribosyl-AMP cyclohydrolase (101 aa).

Aspartate 71 contributes to the Mg(2+) binding site. Cysteine 72 is a binding site for Zn(2+). Positions 73 and 75 each coordinate Mg(2+). Residues cysteine 88 and cysteine 95 each coordinate Zn(2+).

It belongs to the PRA-CH family. As to quaternary structure, homodimer. The cofactor is Mg(2+). Zn(2+) serves as cofactor.

It localises to the cytoplasm. It catalyses the reaction 1-(5-phospho-beta-D-ribosyl)-5'-AMP + H2O = 1-(5-phospho-beta-D-ribosyl)-5-[(5-phospho-beta-D-ribosylamino)methylideneamino]imidazole-4-carboxamide. It participates in amino-acid biosynthesis; L-histidine biosynthesis; L-histidine from 5-phospho-alpha-D-ribose 1-diphosphate: step 3/9. Functionally, catalyzes the hydrolysis of the adenine ring of phosphoribosyl-AMP. This is Phosphoribosyl-AMP cyclohydrolase from Bacillus cereus (strain AH187).